A 224-amino-acid polypeptide reads, in one-letter code: UPF0758 protein SPO0054 (224 aa).

The region spanning 102 to 224 is the MPN domain; sequence VISSWDALLD…ELSFRAEGYL (123 aa). Positions 173, 175, and 186 each coordinate Zn(2+). Residues 173–186 carry the JAMM motif motif; it reads HNHPSGDPTPSQSD.

It belongs to the UPF0758 family.

In Ruegeria pomeroyi (strain ATCC 700808 / DSM 15171 / DSS-3) (Silicibacter pomeroyi), this protein is UPF0758 protein SPO0054.